The following is a 93-amino-acid chain: Translation initiation factor IF-1 (93 aa).

An S1-like domain is found at 1–72 (MAKEELIQFE…EKGRLIFRHK (72 aa)). The interval 70 to 93 (RHKDERPGGPPRSGPPRGGQFRRR) is disordered.

The protein belongs to the IF-1 family. As to quaternary structure, component of the 30S ribosomal translation pre-initiation complex which assembles on the 30S ribosome in the order IF-2 and IF-3, IF-1 and N-formylmethionyl-tRNA(fMet); mRNA recruitment can occur at any time during PIC assembly.

The protein resides in the cytoplasm. Functionally, one of the essential components for the initiation of protein synthesis. Stabilizes the binding of IF-2 and IF-3 on the 30S subunit to which N-formylmethionyl-tRNA(fMet) subsequently binds. Helps modulate mRNA selection, yielding the 30S pre-initiation complex (PIC). Upon addition of the 50S ribosomal subunit IF-1, IF-2 and IF-3 are released leaving the mature 70S translation initiation complex. This Nitrobacter winogradskyi (strain ATCC 25391 / DSM 10237 / CIP 104748 / NCIMB 11846 / Nb-255) protein is Translation initiation factor IF-1.